The sequence spans 432 residues: Histidine--tRNA ligase (432 aa).

This sequence belongs to the class-II aminoacyl-tRNA synthetase family.

It is found in the cytoplasm. It carries out the reaction tRNA(His) + L-histidine + ATP = L-histidyl-tRNA(His) + AMP + diphosphate + H(+). The chain is Histidine--tRNA ligase from Halobacterium salinarum (strain ATCC 29341 / DSM 671 / R1).